The sequence spans 764 residues: FHF complex subunit HOOK interacting protein 2A (764 aa).

The tract at residues S190 to S236 is disordered. The segment covering D203 to S214 has biased composition (polar residues).

The protein belongs to the FHIP family.

May be required for proper functioning of the nervous system. The chain is FHF complex subunit HOOK interacting protein 2A from Mus musculus (Mouse).